The sequence spans 447 residues: Elongation factor 1-alpha (447 aa).

The tr-type G domain maps to 5–230; sequence KIHISIVVIG…DQINEPKRPS (226 aa). Residues 14 to 21 form a G1 region; the sequence is GHVDSGKS. Residue 14–21 participates in GTP binding; that stretch reads GHVDSGKS. Lys-55 bears the N6,N6-dimethyllysine mark. The tract at residues 70–74 is G2; sequence GITID. Lys-79 carries the post-translational modification N6,N6,N6-trimethyllysine. Positions 91-94 are G3; that stretch reads DAPG. Residues 91 to 95 and 153 to 156 each bind GTP; these read DAPGH and NKMD. A G4 region spans residues 153 to 156; the sequence is NKMD. The residue at position 187 (Lys-187) is an N6,N6,N6-trimethyllysine. The tract at residues 194–196 is G5; that stretch reads SGF. Lys-261 carries the N6-methyllysine modification. Glu-289 is subject to 5-glutamyl glycerylphosphorylethanolamine. An N6,N6,N6-trimethyllysine modification is found at Lys-306. Position 362 is a 5-glutamyl glycerylphosphorylethanolamine (Glu-362). Lys-396 is modified (N6,N6,N6-trimethyllysine).

Belongs to the TRAFAC class translation factor GTPase superfamily. Classic translation factor GTPase family. EF-Tu/EF-1A subfamily.

Its subcellular location is the cytoplasm. In terms of biological role, this protein promotes the GTP-dependent binding of aminoacyl-tRNA to the A-site of ribosomes during protein biosynthesis. This chain is Elongation factor 1-alpha (BLT63), found in Hordeum vulgare (Barley).